A 112-amino-acid polypeptide reads, in one-letter code: cAMP-regulated phosphoprotein 19 (112 aa).

An N-acetylmethionine modification is found at Met-1. The span at 1-11 (MSAEVPEAASA) shows a compositional bias: low complexity. The disordered stretch occupies residues 1 to 49 (MSAEVPEAASAEEQKEMEDKVTSPEKAEEAKLKARYPHLGQKPGGSDFL). Ser-2 is modified (N-acetylserine). Ser-2 and Ser-23 each carry phosphoserine. Positions 12–32 (EEQKEMEDKVTSPEKAEEAKL) are enriched in basic and acidic residues. A phosphoserine; by GWL mark is found at Ser-62 and Ser-104. The tract at residues 72–112 (MKNKQLPTATPDKTEVTGDHIPTPQDLPQRKPSLVASKLAG) is disordered. Phosphoserine; by PKA is present on Ser-104. Lys-109 is modified (N6-acetyllysine).

Interacts (when phosphorylated at Ser-62) with PPP2R2D. Interacts with SNCA. Interacts with PPP2R2A; the interaction is direct and this interaction inhibits PP2A activity. Post-translationally, phosphorylation at Ser-62 by MASTL/GWL during mitosis is essential for interaction with PPP2R2D (PR55-delta) and subsequent inactivation of PP2A. Phosphorylated by PKA. Isoform ARPP-19 is found in all brain regions and also present in non-neuronal tissues. Isoform ARPP-16 is enriched in the caudate nucleus, found in low levels in cerebral cortex.

The protein resides in the cytoplasm. Its function is as follows. Protein phosphatase inhibitor that specifically inhibits protein phosphatase 2A (PP2A) during mitosis. Inhibition of PP2A is enhanced when ARPP19 is phosphorylated. When phosphorylated at Ser-62 during mitosis, specifically interacts with PPP2R2D (PR55-delta) and inhibits its activity, leading to inactivation of PP2A, an essential condition to keep cyclin-B1-CDK1 activity high during M phase. May indirectly enhance GAP-43 expression. In Bos taurus (Bovine), this protein is cAMP-regulated phosphoprotein 19 (ARPP19).